The sequence spans 34 residues: Subtilosin-A (34 aa).

A cross-link (cyclopeptide (Asn-Gly)) is located at residues 1–34 (NKGCATCSIGIACLVDGPIPDFECAGATGLGLWG). A cross-link (2-cysteinyl-D-allo-threonine (Cys-Thr)) is located at residues 7 to 28 (CSIGIACLVDGPIPDFECAGAT). A cross-link (2-cysteinyl-L-phenylalanine (Cys-Phe)) is located at residues 13–22 (CLVDGPIPDF).

The protein belongs to the bacteriocin class V family. In terms of processing, alpha-amino of Asn-1 is covalently linked with the carboxyl of Gly-34 to form a cyclopeptide. Thioether cross-links are formed between cysteines and the alpha-carbons of other amino acids, Cys-7 to Thr-28 and Cys-13 to Phe-22. In forming this cross-link, Thr-28 is converted to D-amino acid.

The protein localises to the secreted. Its function is as follows. Has bactericidal activity against some Gram-positive bacteria. This is Subtilosin-A from Cytobacillus firmus (Bacillus firmus).